The primary structure comprises 430 residues: Tol-Pal system protein TolB (430 aa).

The N-terminal stretch at 1–21 is a signal peptide; it reads MKQALRVAFGFLILWASVLHA.

Belongs to the TolB family. The Tol-Pal system is composed of five core proteins: the inner membrane proteins TolA, TolQ and TolR, the periplasmic protein TolB and the outer membrane protein Pal. They form a network linking the inner and outer membranes and the peptidoglycan layer.

The protein localises to the periplasm. Part of the Tol-Pal system, which plays a role in outer membrane invagination during cell division and is important for maintaining outer membrane integrity. TolB occupies a key intermediary position in the Tol-Pal system because it communicates directly with both membrane-embedded components, Pal in the outer membrane and TolA in the inner membrane. The chain is Tol-Pal system protein TolB from Shigella boydii serotype 18 (strain CDC 3083-94 / BS512).